The following is a 432-amino-acid chain: 5'-deoxyadenosine deaminase (432 aa).

The Zn(2+) site is built by His63 and His65. The substrate site is built by Glu92 and His184. Residue His211 participates in Zn(2+) binding. Substrate-binding residues include Glu214 and Asp299. Asp299 contributes to the Zn(2+) binding site.

The protein belongs to the metallo-dependent hydrolases superfamily. MTA/SAH deaminase family. Homotetramer. Requires Zn(2+) as cofactor.

It carries out the reaction 5'-deoxyadenosine + H2O + H(+) = 5'-deoxyinosine + NH4(+). It catalyses the reaction S-adenosyl-L-homocysteine + H2O + H(+) = S-inosyl-L-homocysteine + NH4(+). The enzyme catalyses S-methyl-5'-thioadenosine + H2O + H(+) = S-methyl-5'-thioinosine + NH4(+). The catalysed reaction is adenosine + H2O + H(+) = inosine + NH4(+). The protein operates within amino-acid biosynthesis; S-adenosyl-L-methionine biosynthesis. In terms of biological role, catalyzes the deamination of three SAM-derived enzymatic products, namely 5'-deoxyadenosine, S-adenosyl-L-homocysteine, and 5'-methylthioadenosine, to produce the inosine analogs. Can also deaminate adenosine. The preferred substrate for this enzyme is 5'-deoxyadenosine, but all these substrates are efficiently deaminated. Likely functions in a S-adenosyl-L-methionine (SAM) recycling pathway from S-adenosyl-L-homocysteine (SAH) produced from SAM-dependent methylation reactions. May also be involved in the recycling of 5'-deoxyadenosine, whereupon the 5'-deoxyribose moiety of 5'-deoxyinosine is further metabolized to deoxyhexoses used for the biosynthesis of aromatic amino acids in methanogens. This Methanosarcina mazei (strain ATCC BAA-159 / DSM 3647 / Goe1 / Go1 / JCM 11833 / OCM 88) (Methanosarcina frisia) protein is 5'-deoxyadenosine deaminase.